The chain runs to 226 residues: Probable chemoreceptor glutamine deamidase CheD (226 aa).

Residues 207–226 are disordered; that stretch reads PGGMRVERFDTPSRRDPVGA.

Belongs to the CheD family.

It catalyses the reaction L-glutaminyl-[protein] + H2O = L-glutamyl-[protein] + NH4(+). In terms of biological role, probably deamidates glutamine residues to glutamate on methyl-accepting chemotaxis receptors (MCPs), playing an important role in chemotaxis. This Bordetella bronchiseptica (strain ATCC BAA-588 / NCTC 13252 / RB50) (Alcaligenes bronchisepticus) protein is Probable chemoreceptor glutamine deamidase CheD.